The following is a 465-amino-acid chain: Cysteine--tRNA ligase (465 aa).

A Zn(2+)-binding site is contributed by Cys-27. A 'HIGH' region motif is present at residues 29–39 (PTVYNFFHIGN). Zn(2+)-binding residues include Cys-207, His-232, and Glu-236. The 'KMSKS' region motif lies at 264–268 (KMSKS). Lys-267 contacts ATP.

This sequence belongs to the class-I aminoacyl-tRNA synthetase family. As to quaternary structure, monomer. Zn(2+) is required as a cofactor.

The protein localises to the cytoplasm. It carries out the reaction tRNA(Cys) + L-cysteine + ATP = L-cysteinyl-tRNA(Cys) + AMP + diphosphate. The sequence is that of Cysteine--tRNA ligase from Clostridium botulinum (strain Okra / Type B1).